A 440-amino-acid chain; its full sequence is Beta-1,3-galactosyl-O-glycosyl-glycoprotein beta-1,6-N-acetylglucosaminyltransferase 3 (440 aa).

At 1 to 12 (MKMTGWKKKLCR) the chain is on the cytoplasmic side. A helical; Signal-anchor for type II membrane protein membrane pass occupies residues 13 to 30 (GHHLWALGCYMLLAVVAL). The Lumenal portion of the chain corresponds to 31–440 (RLSLRLKCDV…RHKAIYGTEL (410 aa)). N72 and N108 each carry an N-linked (GlcNAc...) asparagine glycan. Disulfide bonds link C73/C230, C164/C384, C185/C212, and C393/C425.

This sequence belongs to the glycosyltransferase 14 family. Post-translationally, N-glycosylated. As to expression, primarily expressed in mucus-secreting tissues.

Its subcellular location is the golgi apparatus membrane. It catalyses the reaction a 3-O-[beta-D-galactosyl-(1-&gt;3)-N-acetyl-alpha-D-galactosaminyl]-L-seryl-[protein] + UDP-N-acetyl-alpha-D-glucosamine = 3-O-{beta-D-galactosyl-(1-&gt;3)-[N-acetyl-beta-D-glucosaminyl-(1-&gt;6)]-N-acetyl-alpha-D-galactosaminyl}-L-seryl-[protein] + UDP + H(+). It carries out the reaction a 3-O-[beta-D-galactosyl-(1-&gt;3)-N-acetyl-alpha-D-galactosaminyl]-L-threonyl-[protein] + UDP-N-acetyl-alpha-D-glucosamine = a 3-O-{beta-D-galactosyl-(1-&gt;3)-[N-acetyl-beta-D-glucosaminyl-(1-&gt;6)]-N-acetyl-alpha-D-galactosaminyl}-L-threonyl-[protein] + UDP + H(+). The enzyme catalyses a beta-D-Gal-(1-&gt;4)-beta-D-GlcNAc-(1-&gt;3)-beta-D-Gal-(1-&gt;4)-beta-D-GlcNAc derivative + UDP-N-acetyl-alpha-D-glucosamine = a beta-D-Gal-(1-&gt;4)-beta-D-GlcNAc-(1-&gt;3)-[beta-D-GlcNAc-(1-&gt;6)]-beta-D-Gal-(1-&gt;4)-N-acetyl-beta-D-glucosaminyl derivative + UDP + H(+). The catalysed reaction is 3-O-[N-acetyl-beta-D-glucosaminyl-(1-&gt;3)-N-acetyl-alpha-D-galactosaminyl]-L-seryl-[protein] + UDP-N-acetyl-alpha-D-glucosamine = 3-O-[N-acetyl-beta-D-glucosaminyl-(1-&gt;3)-[N-acetyl-beta-D-glucosaminyl-(1-&gt;6)]-N-acetyl-alpha-D-galactosaminyl]-L-seryl-[protein] + UDP + H(+). It catalyses the reaction a 3-O-[N-acetyl-beta-D-glucosaminyl-(1-&gt;3)-N-acetyl-alpha-D-galactosaminyl]-L-threonyl-[protein] + UDP-N-acetyl-alpha-D-glucosamine = 3-O-[N-acetyl-beta-D-glucosaminyl-(1-&gt;3)-[N-acetyl-beta-D-glucosaminyl-(1-&gt;6)]-N-acetyl-alpha-D-galactosaminyl]-L-threonyl-[protein] + UDP + H(+). It participates in protein modification; protein glycosylation. Glycosyltransferase that can synthesize all known mucin beta 6 N-acetylglucosaminides. Mediates core 2 and core 4 O-glycan branching, 2 important steps in mucin-type biosynthesis. Also has I-branching enzyme activity by converting linear into branched poly-N-acetyllactosaminoglycans, leading to introduce the blood group I antigen during embryonic development. The polypeptide is Beta-1,3-galactosyl-O-glycosyl-glycoprotein beta-1,6-N-acetylglucosaminyltransferase 3 (GCNT3) (Bos taurus (Bovine)).